The primary structure comprises 65 residues: Large ribosomal subunit protein bL35 (65 aa).

The segment covering 1-16 has biased composition (basic residues); sequence MPKMKTHRASAKRFKK. Residues 1 to 24 form a disordered region; sequence MPKMKTHRASAKRFKKTANGGLKS.

This sequence belongs to the bacterial ribosomal protein bL35 family.

This Leuconostoc mesenteroides subsp. mesenteroides (strain ATCC 8293 / DSM 20343 / BCRC 11652 / CCM 1803 / JCM 6124 / NCDO 523 / NBRC 100496 / NCIMB 8023 / NCTC 12954 / NRRL B-1118 / 37Y) protein is Large ribosomal subunit protein bL35.